Consider the following 178-residue polypeptide: Gamma-crystallin S (178 aa).

S2 carries the N-acetylserine modification. An N-terminal arm region spans residues 2–5 (SKSV). 2 Beta/gamma crystallin 'Greek key' domains span residues 6-44 (AKITFYDDKNFQGHHYECDSDCPDFHTYLSCCNSIRVTG) and 45-87 (GAWV…KVIH). Positions 88-93 (LSSGGQ) are connecting peptide. Beta/gamma crystallin 'Greek key' domains follow at residues 94–134 (YKLQ…KVLD) and 135–177 (GVWV…RRIM).

The protein belongs to the beta/gamma-crystallin family. Monomer.

Functionally, crystallins are the dominant structural components of the vertebrate eye lens. This Macropus fuliginosus (Western gray kangaroo) protein is Gamma-crystallin S (CRYGS).